A 121-amino-acid polypeptide reads, in one-letter code: uncharacterized protein (121 aa).

Helical transmembrane passes span 16 to 36 (GFMVFYISLFLILWLAAGFAV) and 74 to 94 (LYIAAVTVSGFISVYYEMKTI).

Its subcellular location is the cell membrane. This is an uncharacterized protein from Bacillus subtilis (strain 168).